A 671-amino-acid chain; its full sequence is DNA ligase (671 aa).

Residues 32-36 (DAEYD), 81-82 (SL), and Glu-113 contribute to the NAD(+) site. The N6-AMP-lysine intermediate role is filled by Lys-115. 4 residues coordinate NAD(+): Arg-136, Glu-173, Lys-290, and Lys-314. Cys-408, Cys-411, Cys-426, and Cys-432 together coordinate Zn(2+). The region spanning 593–671 (EIDSPFAGKT…EAEMLRLLGS (79 aa)) is the BRCT domain.

Belongs to the NAD-dependent DNA ligase family. LigA subfamily. Mg(2+) serves as cofactor. The cofactor is Mn(2+).

It carries out the reaction NAD(+) + (deoxyribonucleotide)n-3'-hydroxyl + 5'-phospho-(deoxyribonucleotide)m = (deoxyribonucleotide)n+m + AMP + beta-nicotinamide D-nucleotide.. In terms of biological role, DNA ligase that catalyzes the formation of phosphodiester linkages between 5'-phosphoryl and 3'-hydroxyl groups in double-stranded DNA using NAD as a coenzyme and as the energy source for the reaction. It is essential for DNA replication and repair of damaged DNA. This chain is DNA ligase, found in Shigella dysenteriae serotype 1 (strain Sd197).